A 291-amino-acid chain; its full sequence is tRNA pseudouridine synthase-like 1 (291 aa).

The active-site Nucleophile is the aspartate 66. Tyrosine 130 is a binding site for substrate.

The protein belongs to the tRNA pseudouridine synthase TruA family.

The enzyme catalyses a uridine in tRNA = a pseudouridine in tRNA. The protein is tRNA pseudouridine synthase-like 1 (Pusl1) of Mus musculus (Mouse).